The primary structure comprises 272 residues: Putative pyruvate, phosphate dikinase regulatory protein (272 aa).

153-160 (GVSRTSKT) provides a ligand contact to ADP.

It belongs to the pyruvate, phosphate/water dikinase regulatory protein family. PDRP subfamily.

It carries out the reaction N(tele)-phospho-L-histidyl/L-threonyl-[pyruvate, phosphate dikinase] + ADP = N(tele)-phospho-L-histidyl/O-phospho-L-threonyl-[pyruvate, phosphate dikinase] + AMP + H(+). The catalysed reaction is N(tele)-phospho-L-histidyl/O-phospho-L-threonyl-[pyruvate, phosphate dikinase] + phosphate + H(+) = N(tele)-phospho-L-histidyl/L-threonyl-[pyruvate, phosphate dikinase] + diphosphate. Its function is as follows. Bifunctional serine/threonine kinase and phosphorylase involved in the regulation of the pyruvate, phosphate dikinase (PPDK) by catalyzing its phosphorylation/dephosphorylation. This chain is Putative pyruvate, phosphate dikinase regulatory protein, found in Streptococcus sanguinis (strain SK36).